The sequence spans 210 residues: High frequency lysogenization protein HflD homolog (210 aa).

Residues 103 to 130 are a coiled coil; the sequence is EAKAKLAERLQQIERQLPLYENDIMADQ.

This sequence belongs to the HflD family.

It localises to the cytoplasm. The protein localises to the cell inner membrane. The polypeptide is High frequency lysogenization protein HflD homolog (Actinobacillus pleuropneumoniae serotype 5b (strain L20)).